The chain runs to 475 residues: Threonine synthase (475 aa).

An N6-(pyridoxal phosphate)lysine modification is found at lysine 120.

This sequence belongs to the threonine synthase family. Pyridoxal 5'-phosphate serves as cofactor.

It catalyses the reaction O-phospho-L-homoserine + H2O = L-threonine + phosphate. Its pathway is amino-acid biosynthesis; L-threonine biosynthesis; L-threonine from L-aspartate: step 5/5. In terms of biological role, catalyzes the gamma-elimination of phosphate from L-phosphohomoserine and the beta-addition of water to produce L-threonine. This chain is Threonine synthase (thrC), found in Methylobacillus glycogenes.